Consider the following 251-residue polypeptide: PF03932 family protein CutC (251 aa).

It belongs to the CutC family.

The protein localises to the cytoplasm. This chain is PF03932 family protein CutC, found in Agrobacterium fabrum (strain C58 / ATCC 33970) (Agrobacterium tumefaciens (strain C58)).